The chain runs to 412 residues: Chorismate synthase (412 aa).

Positions 40 and 46 each coordinate NADP(+). FMN is bound by residues 135–137 (RAS), 256–257 (QA), Gly300, 315–319 (KPIST), and Arg341. Residues 391 to 404 (QREPRQESSDEQPA) are compositionally biased toward basic and acidic residues. The disordered stretch occupies residues 391-412 (QREPRQESSDEQPARRAANTAG).

It belongs to the chorismate synthase family. Homotetramer. FMNH2 serves as cofactor.

It catalyses the reaction 5-O-(1-carboxyvinyl)-3-phosphoshikimate = chorismate + phosphate. It functions in the pathway metabolic intermediate biosynthesis; chorismate biosynthesis; chorismate from D-erythrose 4-phosphate and phosphoenolpyruvate: step 7/7. Functionally, catalyzes the anti-1,4-elimination of the C-3 phosphate and the C-6 proR hydrogen from 5-enolpyruvylshikimate-3-phosphate (EPSP) to yield chorismate, which is the branch point compound that serves as the starting substrate for the three terminal pathways of aromatic amino acid biosynthesis. This reaction introduces a second double bond into the aromatic ring system. This Mycobacteroides abscessus (strain ATCC 19977 / DSM 44196 / CCUG 20993 / CIP 104536 / JCM 13569 / NCTC 13031 / TMC 1543 / L948) (Mycobacterium abscessus) protein is Chorismate synthase.